Reading from the N-terminus, the 752-residue chain is Iron-sulfur clusters transporter ABCB7, mitochondrial (752 aa).

A mitochondrion-targeting transit peptide spans 1–22 (MALLAIHSWRWAAAAVAFEKHK). The Mitochondrial matrix portion of the chain corresponds to 23–140 (HSAVLTRSLV…KDRPDLRARV (118 aa)). One can recognise an ABC transmembrane type-1 domain in the interval 140–436 (VAISLGFLGG…LGTVYRETRQ (297 aa)). The chain crosses the membrane as a helical span at residues 141-161 (AISLGFLGGAKAMNIVVPFMF). At 162–185 (KYAVDSLNQMSGNMLNLSDAPNTV) the chain is on the mitochondrial intermembrane side. A helical membrane pass occupies residues 186–206 (ATMATAVLIGYGVSRAGAAFF). Residues 207 to 259 (NEVRNAVFGKVAQNSIRRIAKNVFLHLHNLDLGFHLSRQTGALSKAIDRGTRG) are Mitochondrial matrix-facing. N6-acetyllysine occurs at positions 216 and 251. Residues 260–280 (ISFVLSALVFNLLPIVFEMTL) form a helical membrane-spanning segment. At 281–290 (VSSVLYYKCG) the chain is on the mitochondrial intermembrane side. A helical membrane pass occupies residues 291–311 (AQFALVTLGTLGAYTAFTVAV). Residues 312-382 (TRWRTRFRIE…TLAMLNFGQS (71 aa)) lie on the Mitochondrial matrix side of the membrane. A glutathione-binding site is contributed by 315–319 (RTRFR). S336 carries the post-translational modification Phosphoserine. Y340 bears the Phosphotyrosine mark. T342 is modified (phosphothreonine). Residue K350 is modified to N6-acetyllysine. Residue 378–381 (NFGQ) participates in glutathione binding. Residues 383-403 (AIFSVGLTAIMVLASQGIVAG) traverse the membrane as a helical segment. The Mitochondrial intermembrane segment spans residues 404 to 409 (ALTVGD). A helical transmembrane segment spans residues 410–430 (LVMVNGLLFQLSLPLNFLGTV). A glutathione-binding site is contributed by G428. The Mitochondrial matrix segment spans residues 431–752 (YRETRQALID…SVKGCGNCSC (322 aa)). The ABC transporter domain occupies 472–706 (VAFDNVHFEY…SSSIYSEMWH (235 aa)). ATP is bound by residues Y481 and 505-516 (GGSGSGKSTIVR).

This sequence belongs to the ABC transporter superfamily. ABCB family. Heavy Metal importer (TC 3.A.1.210) subfamily. In terms of assembly, homodimer or heterodimer. Interacts with C10orf88/PAAT. Forms a complex with ABCB10 and FECH, where a dimeric FECH bridges ABCB7 and ABCB10 homodimers; this complex may be required for cellular iron homeostasis, mitochondrial function and heme biosynthesis. Interacts with FECH. Interacts with ATP5F1A. Interacts with COX4I1; this interaction allows the regulation of cellular iron homeostasis and cellular reactive oxygen species (ROS) levels in cardiomyocytes.

It is found in the mitochondrion inner membrane. The catalysed reaction is (glutathione)4[2Fe(III)-2S] cluster(in) + ATP + H2O = (glutathione)4[2Fe(III)-2S] cluster(out) + ADP + phosphate + H(+). In terms of biological role, exports glutathione-coordinated iron-sulfur clusters such as [2Fe-2S]-(GS)4 cluster from the mitochondria to the cytosol in an ATP-dependent manner allowing the assembly of the cytosolic iron-sulfur (Fe/S) cluster-containing proteins and participates in iron homeostasis. Moreover, through a functional complex formed of ABCB7, FECH and ABCB10, also plays a role in the cellular iron homeostasis, mitochondrial function and heme biosynthesis. In cardiomyocytes, regulates cellular iron homeostasis and cellular reactive oxygen species (ROS) levels through its interaction with COX4I1. May also play a role in hematopoiesis. The sequence is that of Iron-sulfur clusters transporter ABCB7, mitochondrial from Rattus norvegicus (Rat).